A 397-amino-acid polypeptide reads, in one-letter code: Phosphonopyruvate decarboxylase (397 aa).

This sequence belongs to the TPP enzyme family. Thiamine diphosphate serves as cofactor. Mg(2+) is required as a cofactor.

It carries out the reaction 3-phosphonopyruvate + H(+) = phosphonoacetaldehyde + CO2. The protein operates within secondary metabolite biosynthesis; bialaphos biosynthesis. Involved in the biosynthesis of phosphinothricin tripeptide (PTT), also known as bialaphos (BA), a natural-product antibiotic and potent herbicide. Catalyzes the decarboxylation of phosphonopyruvate (PnPy) to generate phosphonoacetaldehyde (PnAA). In Streptomyces viridochromogenes (strain DSM 40736 / JCM 4977 / BCRC 1201 / Tue 494), this protein is Phosphonopyruvate decarboxylase.